We begin with the raw amino-acid sequence, 644 residues long: Exoribonuclease 2 (644 aa).

The 328-residue stretch at 189-516 (REDLTALNFV…NHRLLKAIIA (328 aa)) folds into the RNB domain. The region spanning 561-643 (DERFNAEIID…ETRSVIARPA (83 aa)) is the S1 motif domain.

The protein belongs to the RNR ribonuclease family. RNase II subfamily.

Its subcellular location is the cytoplasm. The catalysed reaction is Exonucleolytic cleavage in the 3'- to 5'-direction to yield nucleoside 5'-phosphates.. Its function is as follows. Involved in mRNA degradation. Hydrolyzes single-stranded polyribonucleotides processively in the 3' to 5' direction. This Serratia proteamaculans (strain 568) protein is Exoribonuclease 2.